Consider the following 111-residue polypeptide: CRIB domain-containing protein RIC2 (111 aa).

The CRIB domain maps to 71–84 (IGFPTDVKHLSHIG).

In terms of assembly, interacts with ARAC11/ROP1. As to expression, expressed in roots, leaves, stems, flowers, siliques and pollen.

The protein localises to the cell membrane. Functionally, functions as a downstream effector of Rho-related GTP binding proteins of the 'Rho of Plants' (ROPs) family. Participates in the propagation of ROP GTPase signals in specific cellular responses. Is involved in pollen tube growth regulation through its interaction with ARAC11/ROP1. The polypeptide is CRIB domain-containing protein RIC2 (RIC2) (Arabidopsis thaliana (Mouse-ear cress)).